A 359-amino-acid chain; its full sequence is Mandelate racemase (359 aa).

The active-site Proton acceptor; specific for S-mandelate is K166. Positions 195, 221, and 247 each coordinate Mg(2+). H297 (proton acceptor; specific for R-mandelate) is an active-site residue. Substrate is bound at residue E317.

This sequence belongs to the mandelate racemase/muconate lactonizing enzyme family. Homooctamer. Mg(2+) serves as cofactor.

The catalysed reaction is (S)-mandelate = (R)-mandelate. It functions in the pathway aromatic compound metabolism; (R)-mandelate degradation; benzoate from (R)-mandelate: step 1/4. The polypeptide is Mandelate racemase (mdlA) (Pseudomonas putida (Arthrobacter siderocapsulatus)).